The primary structure comprises 620 residues: Ran-binding protein 10 (620 aa).

A disordered region spans residues 1 to 38 (MAAATADPGAGNPQAGDSSGGDSGGGLPSPGEQELSRR). Residue A2 is modified to N-acetylalanine. Gly residues predominate over residues 18–28 (SSGGDSGGGLP). The B30.2/SPRY domain occupies 35 to 222 (LSRRLQRLYP…VDANFGQQPF (188 aa)). The LisH domain maps to 253–285 (WQAVLQNMVSSYLVHHGYCSTATAFARMTETPI). Residues 291–348 (SIKNRQKIQKLVLEGRVGEAIETTQRFYPGLLEHNPNLLFMLKCRQFVEMVNGTDSEV) enclose the CTLH domain. Over residues 347-398 (EVRSLSSRSPKSQDSYPGSPSLSPRHGPSSSHIHNTGADSPSCSNGVASTKN) the composition is skewed to polar residues. Positions 347–460 (EVRSLSSRSP…SDSEMEMEAE (114 aa)) are disordered. A Phosphoserine modification is found at S361. Y362 carries the post-translational modification Phosphotyrosine. Residues S365, S367, S369, and S422 each carry the phosphoserine modification. A compositionally biased stretch (low complexity) spans 409-436 (SSSSSSSSSSSSSSPSSVNYSESNSTDS). Over residues 437-450 (TKSQPHSSTSNQET) the composition is skewed to polar residues. S451 and S453 each carry phosphoserine.

Belongs to the RANBP9/10 family. May form homodimers. Identified in the CTLH complex that contains GID4, RANBP9 and/or RANBP10, MKLN1, MAEA, RMND5A (or alternatively its paralog RMND5B), GID8, ARMC8, WDR26 and YPEL5. Within this complex, MAEA, RMND5A (or alternatively its paralog RMND5B), GID8, WDR26, and RANBP9 and/or RANBP10 form the catalytic core, while GID4, MKLN1, ARMC8 and YPEL5 have ancillary roles. Interacts with RAN and RANBP9. Interacts with the HGF receptor MET. Interacts with AR. Interacts with TUBB1. Interacts with YPEL5. May interact with TUBB5. Interacts with DDX4. Expressed at highest levels in spleen and liver. Expressed in megakaryocytes and platelets (at protein level).

The protein localises to the cytoplasm. Its subcellular location is the nucleus. May act as an adapter protein to couple membrane receptors to intracellular signaling pathways. Core component of the CTLH E3 ubiquitin-protein ligase complex that selectively accepts ubiquitin from UBE2H and mediates ubiquitination and subsequent proteasomal degradation of the transcription factor HBP1. Enhances dihydrotestosterone-induced transactivation activity of AR, as well as dexamethasone-induced transactivation activity of NR3C1, but does not affect estrogen-induced transactivation. Acts as a guanine nucleotide exchange factor (GEF) for RAN GTPase. May play an essential role in hemostasis and in maintaining microtubule dynamics with respect to both platelet shape and function. This is Ran-binding protein 10 (Ranbp10) from Mus musculus (Mouse).